Reading from the N-terminus, the 516-residue chain is Alstonine synthase (516 aa).

A helical membrane pass occupies residues 6–26 (NFSLTSPIFLLLSSLFLIILL). Cysteine 453 lines the heme pocket.

It belongs to the cytochrome P450 family. Requires heme as cofactor. Highly expressed in stems. Expressed at low levels in roots.

Its subcellular location is the endoplasmic reticulum membrane. It carries out the reaction tetrahydroalstonine + A + reduced [NADPH--hemoprotein reductase] + O2 = alstonine + AH2 + oxidized [NADPH--hemoprotein reductase] + 2 H2O + H(+). The catalysed reaction is ajmalicine + A + reduced [NADPH--hemoprotein reductase] + O2 = serpentine + AH2 + oxidized [NADPH--hemoprotein reductase] + 2 H2O + H(+). Its pathway is alkaloid biosynthesis. In terms of biological role, involved in monoterpene indole alkaloids (MIAs) biosynthesis. Converts by aromatization the tetrahydro-beta-carboline alkaloids tetrahydroalstonine and ajmalicine to the corresponding beta-carboline alkaloids alstonine and serpentine, respectively. This Catharanthus roseus (Madagascar periwinkle) protein is Alstonine synthase.